A 439-amino-acid chain; its full sequence is Protease Do-like 1, chloroplastic (439 aa).

Positions 154 to 323 (QGSGSGFVWD…IPVDTVGGIV (170 aa)) are serine protease. Active-site charge relay system residues include His-173, Asp-203, and Ser-282. A PDZ domain is found at 326–423 (LVRFGKVTRP…EVTVEVLRGD (98 aa)).

Belongs to the peptidase S1C family. As to quaternary structure, interacts with PTAC16 and other potential targets for degradation under high light conditions.

The protein resides in the plastid. The protein localises to the chloroplast thylakoid membrane. Inhibited by phenylmethylsulfonyl fluoride and O-phenanthroline. Its function is as follows. Serine protease that is required at high temperature. May be involved in the degradation of damaged proteins. In vivo, can degrade beta-casein. The chain is Protease Do-like 1, chloroplastic (DEGP1) from Arabidopsis thaliana (Mouse-ear cress).